The chain runs to 395 residues: Subtilisin-like protease 5 (395 aa).

The first 19 residues, 1 to 19 (MGFLTVLYLSLAALSVTNA), serve as a signal peptide directing secretion. Positions 20–115 (AQIMSAPNGA…VEPDAIISQH (96 aa)) are excised as a propeptide. Residues 36-112 (YIVVMKDDTS…VAFVEPDAII (77 aa)) form the Inhibitor I9 domain. The 272-residue stretch at 124-395 (PWGLSRLSNR…RRLLYNGSGR (272 aa)) folds into the Peptidase S8 domain. Residues Asp-155 and His-186 each act as charge relay system in the active site. Residues Asn-229 and Asn-247 are each glycosylated (N-linked (GlcNAc...) asparagine). Ser-341 acts as the Charge relay system in catalysis. The interval 374–395 (QPTIHNPGPDTTRRLLYNGSGR) is disordered. N-linked (GlcNAc...) asparagine glycosylation is present at Asn-391.

The protein belongs to the peptidase S8 family.

Its subcellular location is the secreted. Secreted subtilisin-like serine protease with keratinolytic activity that contributes to pathogenicity. This is Subtilisin-like protease 5 (SUB5) from Arthroderma otae (strain ATCC MYA-4605 / CBS 113480) (Microsporum canis).